Reading from the N-terminus, the 207-residue chain is Guanylate kinase (207 aa).

The Guanylate kinase-like domain maps to 7 to 185 (GIVLVLCAPS…AYDELRAAYI (179 aa)). 14–21 (APSGTGKT) serves as a coordination point for ATP.

It belongs to the guanylate kinase family.

Its subcellular location is the cytoplasm. The enzyme catalyses GMP + ATP = GDP + ADP. Its function is as follows. Essential for recycling GMP and indirectly, cGMP. The protein is Guanylate kinase of Nitratidesulfovibrio vulgaris (strain ATCC 29579 / DSM 644 / CCUG 34227 / NCIMB 8303 / VKM B-1760 / Hildenborough) (Desulfovibrio vulgaris).